The sequence spans 292 residues: E3 ubiquitin-protein ligase RNF144A (292 aa).

The segment at 16-236 is TRIAD supradomain; it reads PLVSCKLCLG…YDKGPCRNKL (221 aa). 14 residues coordinate Zn(2+): Cys20, Cys23, Cys43, Cys46, Cys111, Cys116, Cys135, Cys138, Cys143, Cys146, His151, Cys156, Cys185, and Cys188. An RING-type 1 zinc finger spans residues 20–70; sequence CKLCLGEYPAEQMTTIAQCQCIFCTLCLKQYVELLIKEGLETAISCPDAAC. Residues 91–156 form an IBR-type zinc finger; it reads QRYKKLQFER…KARWHPGQGC (66 aa). The RING-type 2; atypical zinc finger occupies 185–214; it reads CPKCRVYIERDEGCAQMMCKNCKHAFCWYC. Residue Cys198 is part of the active site. Residues Cys203, Cys206, Cys211, Cys214, His226, and Cys232 each contribute to the Zn(2+) site. A helical transmembrane segment spans residues 250-270; that stretch reads VVGIFAGFGLLLLVASPFLLL.

This sequence belongs to the RBR family. RNF144 subfamily. Self-associates. Interacts with UBE2L3. In terms of processing, autoubiquitinated.

The protein resides in the cell membrane. It localises to the cytoplasmic vesicle membrane. The catalysed reaction is [E2 ubiquitin-conjugating enzyme]-S-ubiquitinyl-L-cysteine + [acceptor protein]-L-lysine = [E2 ubiquitin-conjugating enzyme]-L-cysteine + [acceptor protein]-N(6)-ubiquitinyl-L-lysine.. The protein operates within protein modification; protein ubiquitination. Its function is as follows. E3 ubiquitin-protein ligase which accepts ubiquitin from E2 ubiquitin-conjugating enzymes UBE2L3 and UBE2L6 in the form of a thioester and then directly transfers the ubiquitin to targeted substrates. Mediates the ubiquitination and degradation of the DNA damage kinase PRKDC during DNA damage. Positively regulates DNA virus or exogenous cytosolic DNA-triggered innate immune response by mediating STING1 ubiquitination and increasing its 'Lys-6'-linked ubiquitination and translocation from the endoplasmic reticulum to the Golgi leading to downstream signaling pathways. Plays a positive role in EGF-dependent cell proliferation by prolonging EGF/EGFR signaling during EGF stimulation through EGFR ubiquitination. Increases ERK activity independently of EGFR signaling by promoting polyubiquitination and subsequent degradation of VRK3 in the cytosol. This Mus musculus (Mouse) protein is E3 ubiquitin-protein ligase RNF144A (Rnf144a).